The sequence spans 98 residues: MVQMSEGFRRKTRKKLSKHPRERGLYPITRALREFKEGEYVHIVIDPSVHKGMPHPRFHGRTGIVVGKQGRAFIVKVRDGGKYKQIIAYPQHLRPATA.

Positions 1–22 (MVQMSEGFRRKTRKKLSKHPRE) are disordered. Residues 10-21 (RKTRKKLSKHPR) are compositionally biased toward basic residues.

Belongs to the eukaryotic ribosomal protein eL21 family.

This is Large ribosomal subunit protein eL21 (rpl21e) from Methanocaldococcus jannaschii (strain ATCC 43067 / DSM 2661 / JAL-1 / JCM 10045 / NBRC 100440) (Methanococcus jannaschii).